Consider the following 297-residue polypeptide: Virulence genes transcriptional activator (297 aa).

In terms of domain architecture, HTH lysR-type spans 1–61 (MDFLINKKLK…IRKNGTLIPT (61 aa)). Residues 21 to 40 (FSIATSVLYITRTPLSRVIS) constitute a DNA-binding region (H-T-H motif).

Belongs to the LysR transcriptional regulatory family.

Its subcellular location is the cytoplasm. Positive regulator for the plasmid-encoded virulence factors SpvA, SpvB, and SpvC. The protein is Virulence genes transcriptional activator (mkaC) of Salmonella typhimurium (strain LT2 / SGSC1412 / ATCC 700720).